Here is a 103-residue protein sequence, read N- to C-terminus: Small ribosomal subunit protein uS10 (103 aa).

It belongs to the universal ribosomal protein uS10 family. In terms of assembly, part of the 30S ribosomal subunit.

Its function is as follows. Involved in the binding of tRNA to the ribosomes. The chain is Small ribosomal subunit protein uS10 from Aromatoleum aromaticum (strain DSM 19018 / LMG 30748 / EbN1) (Azoarcus sp. (strain EbN1)).